Consider the following 775-residue polypeptide: Polyribonucleotide nucleotidyltransferase (775 aa).

The disordered stretch occupies residues 223–247; that stretch reads DEQVPEKPRKGRRRGRKSSPRKKTD. Residues 231 to 243 show a composition bias toward basic residues; it reads RKGRRRGRKSSPR. Residues Asp567 and Asp573 each contribute to the Mg(2+) site. The KH domain maps to 633 to 692; sequence PRITTISVPVSKIGEVIGPKGKNINQITEDTGARVSIEDDGTVFISATSGGSAEAAVDRI. Positions 704–773 constitute an S1 motif domain; sequence GERFLGTVVK…NRGKISLVPV (70 aa).

The protein belongs to the polyribonucleotide nucleotidyltransferase family. Requires Mg(2+) as cofactor.

The protein resides in the cytoplasm. It carries out the reaction RNA(n+1) + phosphate = RNA(n) + a ribonucleoside 5'-diphosphate. In terms of biological role, involved in mRNA degradation. Catalyzes the phosphorolysis of single-stranded polyribonucleotides processively in the 3'- to 5'-direction. This Corynebacterium kroppenstedtii (strain DSM 44385 / JCM 11950 / CIP 105744 / CCUG 35717) protein is Polyribonucleotide nucleotidyltransferase.